A 199-amino-acid chain; its full sequence is Chaperone protein TorD (199 aa).

The protein belongs to the TorD/DmsD family. TorD subfamily.

Its subcellular location is the cytoplasm. Its function is as follows. Involved in the biogenesis of TorA. Acts on TorA before the insertion of the molybdenum cofactor and, as a result, probably favors a conformation of the apoenzyme that is competent for acquiring the cofactor. The protein is Chaperone protein TorD of Shigella dysenteriae serotype 1 (strain Sd197).